The primary structure comprises 417 residues: Pre-mRNA-splicing factor PRP46 (417 aa).

7 WD repeats span residues 119–159 (AHQG…LKAT), 162–201 (GHIMGVRSLAVSSRYPYLFSGSEDKTVKCWDLERTNSSSG), 209–248 (GHVGGIYAMALHPELDLLFTGGRDSVIRVWDLRSRTEIMV), 251–290 (GHRSDITSIASQIGDPQIITSSMDATIRLWDIRKATTQLA), 293–334 (HHSK…NEFG), 337–376 (GENKIINTLSINPSNNTLFSGYDDGRMEFYDYVSGDLLQS), and 385–417 (STESAIYASTFDMSGLRLITCEGDKSIKIWGEE).

This sequence belongs to the WD repeat PRL1/PRL2 family. Associated with the spliceosome.

The protein localises to the cytoplasm. Its subcellular location is the nucleus. Involved in pre-mRNA splicing and required for cell cycle progression at G2/M. The protein is Pre-mRNA-splicing factor PRP46 (PRP46) of Debaryomyces hansenii (strain ATCC 36239 / CBS 767 / BCRC 21394 / JCM 1990 / NBRC 0083 / IGC 2968) (Yeast).